The following is a 295-amino-acid chain: Deleted in azoospermia-like (295 aa).

Residues 1–10 (MSAANPETPN) show a composition bias toward polar residues. The tract at residues 1 to 25 (MSAANPETPNSTISREASTQSSSAA) is disordered. Over residues 11–25 (STISREASTQSSSAA) the composition is skewed to low complexity. The 76-residue stretch at 40-115 (NTVFVGGIDV…KKLKLGPAIR (76 aa)) folds into the RRM domain. The tract at residues 80–132 (KGYGFVSFFNDVDVQKIVESQINFHGKKLKLGPAIRKQNLCAYHVQPRPLVFN) is homodimerization. A DAZ domain is found at 167–190 (AYPTYPNSPVQVITGYQLPVYNYQ). Tyr-276 is subject to Phosphotyrosine.

Belongs to the RRM DAZ family. In terms of assembly, homodimer and heterodimer. Forms a heterodimer with DAZ. Interacts with BOLL, DAZAP1 and DAZAP2. Interacts with PUM2 Multiple DAZL RRMs can bind to a single RNA containing multiple GUU triplets. Testis specific.

The protein localises to the cytoplasm. Its subcellular location is the nucleus. Its function is as follows. RNA-binding protein, which is essential for gametogenesis in both males and females. Plays a central role during spermatogenesis. Acts by binding to the 3'-UTR of mRNA, specifically recognizing GUU triplets, and thereby regulating the translation of key transcripts. The protein is Deleted in azoospermia-like (DAZL) of Macaca fascicularis (Crab-eating macaque).